The following is a 446-amino-acid chain: MGLGASSEQPAGGEGFHLHGVQENSPAQQAGLEPYFDFIITIGHSRLNKENDTLKALLKANVEKPVKLEVFNMKTMKVREVEVVPSNMWGGQGLLGASVRFCSFRRASEHVWHVLDVEPSSPAALAGLCPYTDYIVGSDQILQESEDFFTLIESHEGKPLKLMVYNSESDSCREVTVTPNAAWGGEGSLGCGIGYGYLHRIPTQPSSQHKKPPGATPPGTPATTSQLTAFPLGAPPPWPIPQDSSGPELGSRQSDFMEALPQVPGSFMEGQLLGPGSPSHGAADCGGCLRAMEIPLQPPPPVQRVMDPGFLDVSGMSLLDSSNISVCPSLSSSTVLTSTAVSVSGPEDIGSSSSSHERGGEATWSGSEFEISFPDSPGAQAQADHLPRLTLPDGLTSAASPEEGLSAELLEAQTEEPADTASLDCRAETEGRASQAQATPDPEPGL.

The segment at Met1–Gly20 is disordered. A lipid anchor (N-myristoyl glycine) is attached at Gly2. 2 PDZ GRASP-type domains span residues Glu14 to Phe104 and His110 to Leu198. A GRASP region spans residues Glu14–Gly214. Positions 17, 19, and 102 each coordinate Zn(2+). The tract at residues Leu189–Ile201 is essential for interaction with GOLGA2/GM130. 2 disordered regions span residues Pro202–Arg252 and Val343–Leu446. Phosphothreonine is present on residues Thr216, Thr220, and Thr224. Over residues Val343 to Ser354 the composition is skewed to low complexity. Residues Ser365, Ser367, and Ser376 each carry the phosphoserine modification.

Belongs to the GORASP family. Homodimer. Forms higher-order oligomers under interphase but not mitotic conditions. Dimers of the protein on one membrane might be able to interact with dimers on another and so stack cisternae. Interacts with the C-terminus of GOLGA2/GM130 under both mitotic and non-mitotic conditions. The interaction is critical for the correct targeting of both proteins to the cis-Golgi. Interacts with TMED2 and TMED3. In terms of processing, phosphorylated by CDC2/B1 and PLK kinases during mitosis. Phosphorylation cycle correlates with the cisternal stacking cycle. Phosphorylation of the homodimer prevents the association of dimers into higher-order oligomers, leading to cisternal unstacking. Target for caspase-3 cleavage during apoptosis. The cleavage contributes to Golgi fragmentation and occurs very early in the execution phase of apoptosis. Post-translationally, myristoylated.

The protein resides in the golgi apparatus. The protein localises to the cis-Golgi network membrane. Its function is as follows. Key structural protein of the Golgi apparatus. The membrane cisternae of the Golgi apparatus adhere to each other to form stacks, which are aligned side by side to form the Golgi ribbon. Acting in concert with GORASP2/GRASP55, is required for the formation and maintenance of the Golgi ribbon, and may be dispensable for the formation of stacks. However, other studies suggest that GORASP1 plays an important role in assembly and membrane stacking of the cisternae, and in the reassembly of Golgi stacks after breakdown during mitosis. Caspase-mediated cleavage of GORASP1 is required for fragmentation of the Golgi during apoptosis. Also mediates, via its interaction with GOLGA2/GM130, the docking of transport vesicles with the Golgi membranes. Mediates ER stress-induced unconventional (ER/Golgi-independent) trafficking of core-glycosylated CFTR to cell membrane. In Mus musculus (Mouse), this protein is Golgi reassembly-stacking protein 1 (Gorasp1).